We begin with the raw amino-acid sequence, 367 residues long: uncharacterized protein (367 aa).

4 consecutive transmembrane segments (helical) span residues 18–38 (ILAL…GILG), 239–259 (VSYF…IGIG), 296–316 (ILGV…GYLI), and 329–349 (AIFY…ISAL).

Belongs to the ABC-4 integral membrane protein family.

The protein resides in the cell membrane. This is an uncharacterized protein from Methanocaldococcus jannaschii (strain ATCC 43067 / DSM 2661 / JAL-1 / JCM 10045 / NBRC 100440) (Methanococcus jannaschii).